A 101-amino-acid polypeptide reads, in one-letter code: NAD(P)H-quinone oxidoreductase subunit 4L, chloroplastic (101 aa).

3 helical membrane-spanning segments follow: residues 2 to 22 (ILEH…YGLI), 32 to 52 (MCLE…SDFF), and 61 to 81 (IFCI…LAIV).

It belongs to the complex I subunit 4L family. NDH is composed of at least 16 different subunits, 5 of which are encoded in the nucleus.

It is found in the plastid. The protein resides in the chloroplast thylakoid membrane. It carries out the reaction a plastoquinone + NADH + (n+1) H(+)(in) = a plastoquinol + NAD(+) + n H(+)(out). The enzyme catalyses a plastoquinone + NADPH + (n+1) H(+)(in) = a plastoquinol + NADP(+) + n H(+)(out). NDH shuttles electrons from NAD(P)H:plastoquinone, via FMN and iron-sulfur (Fe-S) centers, to quinones in the photosynthetic chain and possibly in a chloroplast respiratory chain. The immediate electron acceptor for the enzyme in this species is believed to be plastoquinone. Couples the redox reaction to proton translocation, and thus conserves the redox energy in a proton gradient. This chain is NAD(P)H-quinone oxidoreductase subunit 4L, chloroplastic, found in Arabis hirsuta (Hairy rock-cress).